A 179-amino-acid chain; its full sequence is Large ribosomal subunit protein uL6 (179 aa).

The protein belongs to the universal ribosomal protein uL6 family. In terms of assembly, part of the 50S ribosomal subunit.

This protein binds to the 23S rRNA, and is important in its secondary structure. It is located near the subunit interface in the base of the L7/L12 stalk, and near the tRNA binding site of the peptidyltransferase center. This Akkermansia muciniphila (strain ATCC BAA-835 / DSM 22959 / JCM 33894 / BCRC 81048 / CCUG 64013 / CIP 107961 / Muc) protein is Large ribosomal subunit protein uL6.